The sequence spans 175 residues: ATP synthase subunit delta (175 aa).

This sequence belongs to the ATPase delta chain family. F-type ATPases have 2 components, F(1) - the catalytic core - and F(0) - the membrane proton channel. F(1) has five subunits: alpha(3), beta(3), gamma(1), delta(1), epsilon(1). F(0) has three main subunits: a(1), b(2) and c(10-14). The alpha and beta chains form an alternating ring which encloses part of the gamma chain. F(1) is attached to F(0) by a central stalk formed by the gamma and epsilon chains, while a peripheral stalk is formed by the delta and b chains.

The protein resides in the cell inner membrane. F(1)F(0) ATP synthase produces ATP from ADP in the presence of a proton or sodium gradient. F-type ATPases consist of two structural domains, F(1) containing the extramembraneous catalytic core and F(0) containing the membrane proton channel, linked together by a central stalk and a peripheral stalk. During catalysis, ATP synthesis in the catalytic domain of F(1) is coupled via a rotary mechanism of the central stalk subunits to proton translocation. In terms of biological role, this protein is part of the stalk that links CF(0) to CF(1). It either transmits conformational changes from CF(0) to CF(1) or is implicated in proton conduction. This is ATP synthase subunit delta from Xylella fastidiosa (strain M23).